A 275-amino-acid polypeptide reads, in one-letter code: MSDLQKTIIEDLHVEPEIDPKQEIRTRVDFLKSYLKKHTFSTGYVLGMSGGQDSTLLSKLTQIAVNELNEENSTNTYQFIGMKLPYGVQKDADDVDDAIKFVEPSKVLTVNIKESVDASVKALDGAGVEISDFLKGNEKARERMKAQYSVAGAFNCFVLGTDHAAEAVTGFYTKHGDGACDLAPLFGLNKRQGKQMLVALNCPEHLYNKKPTADLEDDRPALPDEEALGVTYEQIDEFLEGKEVAEDSKRTIEGHYLKTMHKREGEVTLYDQWWK.

Gly47–Ser54 lines the ATP pocket. Mg(2+) is bound at residue Asp53. Arg141 serves as a coordination point for deamido-NAD(+). Thr161 provides a ligand contact to ATP. Glu166 lines the Mg(2+) pocket. Deamido-NAD(+) contacts are provided by Lys174 and Asp181. 2 residues coordinate ATP: Lys190 and Thr212. His261 to Lys262 contacts deamido-NAD(+).

Belongs to the NAD synthetase family. In terms of assembly, homodimer.

The catalysed reaction is deamido-NAD(+) + NH4(+) + ATP = AMP + diphosphate + NAD(+) + H(+). The protein operates within cofactor biosynthesis; NAD(+) biosynthesis; NAD(+) from deamido-NAD(+) (ammonia route): step 1/1. Catalyzes the ATP-dependent amidation of deamido-NAD to form NAD. Uses ammonia as a nitrogen source. This chain is NH(3)-dependent NAD(+) synthetase, found in Oceanobacillus iheyensis (strain DSM 14371 / CIP 107618 / JCM 11309 / KCTC 3954 / HTE831).